A 162-amino-acid chain; its full sequence is B-box zinc finger protein 23 (162 aa).

Cysteine 5, cysteine 8, cysteine 28, histidine 33, cysteine 63, cysteine 66, cysteine 86, and histidine 91 together coordinate Zn(2+). The B box-type 1; atypical zinc finger occupies 5–47 (CEVCEKAEAEVLCCSDEAVLCKPCDIKVHEANKLFQRHHRVAL). The B box-type 2; atypical zinc finger occupies 63-101 (CDICQERKGYFFCLEDRAMLCNDCDEAIHTCNSHQRFLL). The disordered stretch occupies residues 137-162 (QYSSEETEAGNSGEIVHKNPSVILSP).

Its subcellular location is the nucleus. In terms of biological role, probable transcription factor that may be involved in seedling photomorphogenesis. This chain is B-box zinc finger protein 23, found in Arabidopsis thaliana (Mouse-ear cress).